Reading from the N-terminus, the 331-residue chain is Ribosomal RNA small subunit methyltransferase H (331 aa).

S-adenosyl-L-methionine contacts are provided by residues 48 to 50 (GGH), aspartate 67, aspartate 115, and glutamine 122. Residues 297-331 (RGTEKPTEEEISENRRASSAKVRAVEKIRTSRTTA) are disordered. Residues 298–312 (GTEKPTEEEISENRR) are compositionally biased toward basic and acidic residues.

It belongs to the methyltransferase superfamily. RsmH family.

It is found in the cytoplasm. The catalysed reaction is cytidine(1402) in 16S rRNA + S-adenosyl-L-methionine = N(4)-methylcytidine(1402) in 16S rRNA + S-adenosyl-L-homocysteine + H(+). Functionally, specifically methylates the N4 position of cytidine in position 1402 (C1402) of 16S rRNA. This is Ribosomal RNA small subunit methyltransferase H from Micrococcus luteus (strain ATCC 4698 / DSM 20030 / JCM 1464 / CCM 169 / CCUG 5858 / IAM 1056 / NBRC 3333 / NCIMB 9278 / NCTC 2665 / VKM Ac-2230) (Micrococcus lysodeikticus).